The sequence spans 156 residues: UPF0587 protein (156 aa).

Residues Cys32, Cys35, Cys64, and Cys67 each contribute to the Zn(2+) site.

It belongs to the UPF0587 family.

This is UPF0587 protein from Dictyostelium discoideum (Social amoeba).